The sequence spans 283 residues: Thymidylate synthase (283 aa).

Arg22 is a dUMP binding site. Catalysis depends on Cys160, which acts as the Nucleophile. Residues 180–183, Asn191, and 221–223 each bind dUMP; these read RSCD and HIY. Asp183 is a binding site for (6R)-5,10-methylene-5,6,7,8-tetrahydrofolate. Ala282 provides a ligand contact to (6R)-5,10-methylene-5,6,7,8-tetrahydrofolate.

It belongs to the thymidylate synthase family. Bacterial-type ThyA subfamily. In terms of assembly, homodimer.

Its subcellular location is the cytoplasm. The catalysed reaction is dUMP + (6R)-5,10-methylene-5,6,7,8-tetrahydrofolate = 7,8-dihydrofolate + dTMP. The protein operates within pyrimidine metabolism; dTTP biosynthesis. In terms of biological role, catalyzes the reductive methylation of 2'-deoxyuridine-5'-monophosphate (dUMP) to 2'-deoxythymidine-5'-monophosphate (dTMP) while utilizing 5,10-methylenetetrahydrofolate (mTHF) as the methyl donor and reductant in the reaction, yielding dihydrofolate (DHF) as a by-product. This enzymatic reaction provides an intracellular de novo source of dTMP, an essential precursor for DNA biosynthesis. In Colwellia psychrerythraea (strain 34H / ATCC BAA-681) (Vibrio psychroerythus), this protein is Thymidylate synthase.